The sequence spans 155 residues: Endoribonuclease YbeY (155 aa).

Zn(2+)-binding residues include histidine 118, histidine 122, and histidine 128.

This sequence belongs to the endoribonuclease YbeY family. Requires Zn(2+) as cofactor.

It localises to the cytoplasm. Functionally, single strand-specific metallo-endoribonuclease involved in late-stage 70S ribosome quality control and in maturation of the 3' terminus of the 16S rRNA. This is Endoribonuclease YbeY from Bordetella petrii (strain ATCC BAA-461 / DSM 12804 / CCUG 43448).